The following is a 900-amino-acid chain: Isoleucine--tRNA ligase (900 aa).

Positions 58–68 (PYANGDLHTGH) match the 'HIGH' region motif. E550 contributes to the L-isoleucyl-5'-AMP binding site. The short motif at 591–595 (KMSKS) is the 'KMSKS' region element. K594 lines the ATP pocket. 4 residues coordinate Zn(2+): C871, C874, C888, and C891.

The protein belongs to the class-I aminoacyl-tRNA synthetase family. IleS type 1 subfamily. As to quaternary structure, monomer. Requires Zn(2+) as cofactor.

The protein localises to the cytoplasm. The catalysed reaction is tRNA(Ile) + L-isoleucine + ATP = L-isoleucyl-tRNA(Ile) + AMP + diphosphate. Functionally, catalyzes the attachment of isoleucine to tRNA(Ile). As IleRS can inadvertently accommodate and process structurally similar amino acids such as valine, to avoid such errors it has two additional distinct tRNA(Ile)-dependent editing activities. One activity is designated as 'pretransfer' editing and involves the hydrolysis of activated Val-AMP. The other activity is designated 'posttransfer' editing and involves deacylation of mischarged Val-tRNA(Ile). The sequence is that of Isoleucine--tRNA ligase from Malacoplasma penetrans (strain HF-2) (Mycoplasma penetrans).